The sequence spans 797 residues: MKCPGVWGMLTVTMCVVFLGCPQAQELQGHVSVILLGATGDLAKKYLWQGLFQLFLDEAGKGHSFSFHGAALTAPKQGQELMAKALESLSCPRDMAPSRCAELQAQFLRLSRYRQLKTAEDYQALGRDIEAQVQQEGLREAGRMFYFSVPPFAYADIARNINSSCRPGPGAWLRVVLEKPFGHDHLSAQQLATELGSFFQEEEMYRVDHYLGKQAVAQILPFRDQNRRALDSLWNRHHVERVEIIMKETVDAEGRTSFYEEYGVIRDTLQNHLTEILTLVAMELPANVSCSEAVLRHKLQAFRALRRLQRGSAVVGQYQTYSEQVRRELRKPAGSPSLTPTFAGVLVHVDNLRWEGVPFILMSGKALDERVGYVRVLFKNQAFCAQSEKHWAPAQSRCLPRQIIFYIGHGELGHPAVLVSRNLFRPFLPAQSWREVEDRPGLQLFGRPLSDFYAFSPVKERDAYSILLSHIFHARKESFVPTEHLLASWVFWTPLLESLAREVPRLYPGGADSGRLLDFEFSGSHLSFSLGQPEQLVPGPGSTPRPSDFQVLGAKYRESPLISAWPDELISKLASDIEAAAVQAVRRVGTFHLALSGGSSPIALFQQLASGHYGFPWAHTHLWLVDERCVPLSDPESNFQGLQAHLLQHVRVPYYNIHPMPVNLHQRLCAEEDRGAQAYASEISALVTNCSFDLVLLGMGTDGHTASLFPQSPTGLDGEQLVVLTESPSRPHQRMSLSLPLINRAKKVAVLVMGRTKRDITLLVSRVGREPKKWPISGVLPTSGQLVWYMDYEAFLG.

The first 24 residues, methionine 1 to alanine 24, serve as a signal peptide directing secretion. Glutamine 25 is modified (pyrrolidone carboxylic acid). The segment at glutamine 25–glycine 531 is hexose-6-phosphate dehydrogenase. Residues glycine 37–lysine 44 and tyrosine 154 each bind NADP(+). Asparagine 162 carries N-linked (GlcNAc...) asparagine glycosylation. Lysine 179 is a binding site for NADP(+). D-glucose 6-phosphate-binding positions include lysine 179, histidine 209–lysine 213, glutamate 248, and aspartate 267. An N6-succinyllysine modification is found at lysine 213. Histidine 272 serves as the catalytic Proton acceptor. Asparagine 287 carries N-linked (GlcNAc...) asparagine glycosylation. Residues lysine 365 and arginine 370 each contribute to the D-glucose 6-phosphate site. Arginine 375 lines the NADP(+) pocket. A linker region spans residues glutamine 532 to arginine 545. Residues proline 546–glycine 797 are 6-phosphogluconolactonase. Residue tryptophan 623 coordinates NADP(+). A glycan (N-linked (GlcNAc...) asparagine) is linked at asparagine 689.

This sequence in the N-terminal section; belongs to the glucose-6-phosphate dehydrogenase family. The protein in the C-terminal section; belongs to the glucosamine/galactosamine-6-phosphate isomerase family. 6-phosphogluconolactonase subfamily. Homodimer.

The protein localises to the endoplasmic reticulum lumen. It catalyses the reaction D-glucose 6-phosphate + NAD(+) = 6-phospho-D-glucono-1,5-lactone + NADH + H(+). The enzyme catalyses D-glucose 6-phosphate + NADP(+) = 6-phospho-D-glucono-1,5-lactone + NADPH + H(+). The catalysed reaction is 6-phospho-D-glucono-1,5-lactone + H2O = 6-phospho-D-gluconate + H(+). It carries out the reaction 2-deoxy-D-glucose 6-phosphate + NAD(+) = 2-deoxy-6-phospho-D-glucono-1,5-lactone + NADH + H(+). It catalyses the reaction 2-deoxy-D-glucose 6-phosphate + NADP(+) = 2-deoxy-6-phospho-D-glucono-1,5-lactone + NADPH + H(+). The enzyme catalyses D-galactose 6-phosphate + NADP(+) = 6-phospho-D-galactono-1,5-lactone + NADPH + H(+). The catalysed reaction is D-galactose 6-phosphate + NAD(+) = 6-phospho-D-galactono-1,5-lactone + NADH + H(+). It carries out the reaction D-glucosamine 6-phosphate + NADP(+) = 2-amino-2-deoxy-6-phospho-D-glucono-1,5-lactone + NADPH + 2 H(+). It catalyses the reaction D-glucose + NAD(+) = D-glucono-1,5-lactone + NADH + H(+). The enzyme catalyses D-glucose + NADP(+) = D-glucono-1,5-lactone + NADPH + H(+). The catalysed reaction is D-glucose 6-sulfate + NADP(+) = 6-sulfo-D-glucono-1,5-lactone + NADPH + H(+). The protein operates within carbohydrate degradation; pentose phosphate pathway; D-ribulose 5-phosphate from D-glucose 6-phosphate (oxidative stage). It functions in the pathway carbohydrate degradation; pentose phosphate pathway; D-ribulose 5-phosphate from D-glucose 6-phosphate (oxidative stage): step 2/3. In terms of biological role, bifunctional enzyme localized in the lumen of the endoplasmic reticulum that catalyzes the first two steps of the oxidative branch of the pentose phosphate pathway/shunt, an alternative to glycolysis and a major source of reducing power and metabolic intermediates for biosynthetic processes. Has a hexose-6-phosphate dehydrogenase activity, with broad substrate specificity compared to glucose-6-phosphate 1-dehydrogenase/G6PD, and catalyzes the first step of the pentose phosphate pathway. In addition, acts as a 6-phosphogluconolactonase and catalyzes the second step of the pentose phosphate pathway. May have a dehydrogenase activity for alternative substrates including glucosamine 6-phosphate and glucose 6-sulfate. The main function of this enzyme is to provide reducing equivalents such as NADPH to maintain the adequate levels of reductive cofactors in the oxidizing environment of the endoplasmic reticulum. By producing NADPH that is needed by reductases of the lumen of the endoplasmic reticulum like corticosteroid 11-beta-dehydrogenase isozyme 1/HSD11B1, indirectly regulates their activity. This chain is GDH/6PGL endoplasmic bifunctional protein, found in Oryctolagus cuniculus (Rabbit).